Here is a 374-residue protein sequence, read N- to C-terminus: Chaperone protein DnaJ (374 aa).

One can recognise a J domain in the interval 4 to 68 (DYYDILGVSR…QMRGRYDQFG (65 aa)). Residues 133-215 (GGEQQIRISH…CGGRGQNQVS (83 aa)) form a CR-type zinc finger. Positions 146, 149, 163, 166, 189, 192, 203, and 206 each coordinate Zn(2+). CXXCXGXG motif repeat units follow at residues 146-153 (CKTCEGTG), 163-170 (CSTCQGSG), 189-196 (CPTCNGQG), and 203-210 (CDSCGGRG).

Belongs to the DnaJ family. In terms of assembly, homodimer. Requires Zn(2+) as cofactor.

It localises to the cytoplasm. In terms of biological role, participates actively in the response to hyperosmotic and heat shock by preventing the aggregation of stress-denatured proteins and by disaggregating proteins, also in an autonomous, DnaK-independent fashion. Unfolded proteins bind initially to DnaJ; upon interaction with the DnaJ-bound protein, DnaK hydrolyzes its bound ATP, resulting in the formation of a stable complex. GrpE releases ADP from DnaK; ATP binding to DnaK triggers the release of the substrate protein, thus completing the reaction cycle. Several rounds of ATP-dependent interactions between DnaJ, DnaK and GrpE are required for fully efficient folding. Also involved, together with DnaK and GrpE, in the DNA replication of plasmids through activation of initiation proteins. The polypeptide is Chaperone protein DnaJ (Acaryochloris marina (strain MBIC 11017)).